Here is a 315-residue protein sequence, read N- to C-terminus: Ribosomal RNA small subunit methyltransferase H (315 aa).

S-adenosyl-L-methionine contacts are provided by residues 35–37 (GGH), Asp55, Phe80, Asp102, and Gln109.

It belongs to the methyltransferase superfamily. RsmH family.

It is found in the cytoplasm. It carries out the reaction cytidine(1402) in 16S rRNA + S-adenosyl-L-methionine = N(4)-methylcytidine(1402) in 16S rRNA + S-adenosyl-L-homocysteine + H(+). Specifically methylates the N4 position of cytidine in position 1402 (C1402) of 16S rRNA. The sequence is that of Ribosomal RNA small subunit methyltransferase H from Shewanella pealeana (strain ATCC 700345 / ANG-SQ1).